The sequence spans 311 residues: Small ribosomal subunit protein uS3 (311 aa).

One can recognise a KH type-2 domain in the interval 17–86 (MDEYFAEQLN…NPQIDAQEVK (70 aa)). The disordered stretch occupies residues 190–267 (PDSYTTTEPS…EPQAEVAEDL (78 aa)). The span at 194–204 (TTTEPSEPVTE) shows a compositional bias: low complexity. The span at 205–231 (PVEKPAEKPAAKPAEKPVEAPKKESAA) shows a compositional bias: basic and acidic residues. The segment covering 232 to 247 (KPKTPAVAPEKPVETA) has biased composition (low complexity). Positions 248 to 267 (EVAEPEEAEEEPQAEVAEDL) are enriched in acidic residues.

Belongs to the universal ribosomal protein uS3 family. Part of the 30S ribosomal subunit.

In terms of biological role, binds the lower part of the 30S subunit head. The sequence is that of Small ribosomal subunit protein uS3 from Methanosarcina barkeri (strain Fusaro / DSM 804).